Here is a 441-residue protein sequence, read N- to C-terminus: 3'-N-debenzoyl-2'-deoxytaxol N-benzoyltransferase (441 aa).

Residues His-163 and Asp-373 each act as proton acceptor in the active site.

This sequence belongs to the plant acyltransferase family.

It catalyses the reaction 3'-N-debenzoyltaxol + benzoyl-CoA = paclitaxel + CoA + H(+). It functions in the pathway alkaloid biosynthesis; taxol biosynthesis. In terms of biological role, catalyzes the stereoselective coupling of the surrogate substrate N-debenzoyl-(3'RS)-2'-deoxytaxol with benzoyl-CoA to form predominantly one 3'-epimer of 2'-deoxytaxol. This enzymatic reaction constitutes the final acylation in the taxol biosynthetic pathway. The polypeptide is 3'-N-debenzoyl-2'-deoxytaxol N-benzoyltransferase (Taxus canadensis (Canadian yew)).